A 1481-amino-acid chain; its full sequence is RNA helicase aquarius (1481 aa).

The interval 1-416 (MAAPAQPKKI…LVSRHERRIS (416 aa)) is helical region with structural similarity to ARM repeat domains. Residues 417-1481 (QIQQLNQMPL…DAESVPTETE (1065 aa)) are required for assembly of the IB complex. A disordered region spans residues 754-773 (RSGKGKKRKDADGEEDDTEE). ATP contacts are provided by residues Gln-801, Gln-806, and 826 to 831 (GTGKTD). Lys-1055 is subject to N6-acetyllysine. Positions 1396 to 1414 (EEGEEGQSQETEMEAEEET) are enriched in acidic residues. Positions 1396-1481 (EEGEEGQSQE…DAESVPTETE (86 aa)) are disordered. Residues 1418 to 1448 (QGNLTPSPADASLSQETPAAQPDCSSQTEDT) show a composition bias toward polar residues. The segment covering 1455–1468 (ATAAEPVSAAAEAA) has biased composition (low complexity).

The protein belongs to the CWF11 family. Identified in the spliceosome C complex. Component of the XAB2 complex, a multimeric protein complex composed of XAB2, PRPF19, AQR, ZNF830, ISY1, and PPIE. Identified in a pentameric intron-binding (IB) complex composed of AQR, XAB2, ISY1, ZNF830 and PPIE that is incorporated into the spliceosome as a preassembled complex. The IB complex does not contain PRPF19. Within the spliceosome, interacts with SNRPA1, SF3B1, SF3B3, SF3A1 and SF3A2.

It is found in the nucleus. The protein localises to the nucleoplasm. The catalysed reaction is ATP + H2O = ADP + phosphate + H(+). Involved in pre-mRNA splicing as component of the spliceosome. Intron-binding spliceosomal protein required to link pre-mRNA splicing and snoRNP (small nucleolar ribonucleoprotein) biogenesis. Plays a key role in position-dependent assembly of intron-encoded box C/D small snoRNP, splicing being required for snoRNP assembly. May act by helping the folding of the snoRNA sequence. Binds to intron of pre-mRNAs in a sequence-independent manner, contacting the region between snoRNA and the branchpoint of introns (40 nucleotides upstream of the branchpoint) during the late stages of splicing. Has ATP-dependent RNA helicase activity and can unwind double-stranded RNA molecules with a 3' overhang (in vitro). In Mus musculus (Mouse), this protein is RNA helicase aquarius (Aqr).